The sequence spans 304 residues: Protoheme IX farnesyltransferase 2 (304 aa).

The next 9 membrane-spanning stretches (helical) occupy residues 28–48 (VVAL…VVDF), 50–70 (WLQA…AAAF), 98–118 (ISVA…LYAL), 122–142 (LTAW…TMYL), 150–170 (IVIA…AVTG), 176–196 (AWLL…AIAI), 223–243 (ILLY…VGMV), 245–265 (SVYL…AWKL), and 282–302 (IYHL…GLFF).

The protein belongs to the UbiA prenyltransferase family. Protoheme IX farnesyltransferase subfamily.

It is found in the cell inner membrane. It catalyses the reaction heme b + (2E,6E)-farnesyl diphosphate + H2O = Fe(II)-heme o + diphosphate. It functions in the pathway porphyrin-containing compound metabolism; heme O biosynthesis; heme O from protoheme: step 1/1. Its function is as follows. Converts heme B (protoheme IX) to heme O by substitution of the vinyl group on carbon 2 of heme B porphyrin ring with a hydroxyethyl farnesyl side group. The protein is Protoheme IX farnesyltransferase 2 of Vibrio campbellii (strain ATCC BAA-1116).